A 674-amino-acid polypeptide reads, in one-letter code: Probable L-type lectin-domain containing receptor kinase II.1 (674 aa).

An N-terminal signal peptide occupies residues 1–24; sequence MAGVLGSVVFWLIIGIHVTFLVFA. The Extracellular portion of the chain corresponds to 25 to 301; sequence QEGDHFVYYD…PSPKRFPLKE (277 aa). The segment at 28 to 274 is legume-lectin like; the sequence is DHFVYYDFRN…NQYILGWSFK (247 aa). N-linked (GlcNAc...) asparagine glycosylation is found at N57, N117, N133, N185, N210, and N242. The helical transmembrane segment at 302-322 threads the bilayer; that stretch reads VLGATISTIAFLTLGGIVYLY. The Cytoplasmic segment spans residues 323-674; sequence KKKKYAEVLE…EDVTVLFGGR (352 aa). A Protein kinase domain is found at 355-633; the sequence is FRENQLLGAG…LEGNVSVPAI (279 aa). Residues 361 to 369 and K383 contribute to the ATP site; that span reads LGAGGFGKV. The Proton acceptor role is filled by D480.

In the C-terminal section; belongs to the protein kinase superfamily. Ser/Thr protein kinase family. The protein in the N-terminal section; belongs to the leguminous lectin family.

The protein localises to the cell membrane. It carries out the reaction L-seryl-[protein] + ATP = O-phospho-L-seryl-[protein] + ADP + H(+). The catalysed reaction is L-threonyl-[protein] + ATP = O-phospho-L-threonyl-[protein] + ADP + H(+). The protein is Probable L-type lectin-domain containing receptor kinase II.1 (LECRK21) of Arabidopsis thaliana (Mouse-ear cress).